A 96-amino-acid polypeptide reads, in one-letter code: Co-chaperonin GroES (96 aa).

This sequence belongs to the GroES chaperonin family. Heptamer of 7 subunits arranged in a ring. Interacts with the chaperonin GroEL.

The protein localises to the cytoplasm. Together with the chaperonin GroEL, plays an essential role in assisting protein folding. The GroEL-GroES system forms a nano-cage that allows encapsulation of the non-native substrate proteins and provides a physical environment optimized to promote and accelerate protein folding. GroES binds to the apical surface of the GroEL ring, thereby capping the opening of the GroEL channel. This Actinobacillus pleuropneumoniae serotype 7 (strain AP76) protein is Co-chaperonin GroES.